The primary structure comprises 699 residues: Elongation factor G (699 aa).

The tr-type G domain maps to 8 to 283 (EQIRNIGICA…AIVDFLPSPI (276 aa)). Residues 17–24 (AHIDAGKT), 81–85 (DTPGH), and 135–138 (NKMD) contribute to the GTP site.

The protein belongs to the TRAFAC class translation factor GTPase superfamily. Classic translation factor GTPase family. EF-G/EF-2 subfamily.

The protein resides in the cytoplasm. Its function is as follows. Catalyzes the GTP-dependent ribosomal translocation step during translation elongation. During this step, the ribosome changes from the pre-translocational (PRE) to the post-translocational (POST) state as the newly formed A-site-bound peptidyl-tRNA and P-site-bound deacylated tRNA move to the P and E sites, respectively. Catalyzes the coordinated movement of the two tRNA molecules, the mRNA and conformational changes in the ribosome. This chain is Elongation factor G (fusA), found in Rickettsia prowazekii (strain Madrid E).